A 722-amino-acid polypeptide reads, in one-letter code: MSLFLFAIFQLALGSPGAPNGPNVPLQLTGVRRGLDHVQKLPSEAFSFKLFGKNLAEDGYYFTTATRCEDSHLSTVSTVRATVKESYCSYAILSVPEGLPFNVSTSVYHLCHKNATIYTQKFLVVHEKKAAAAKYMGDEIVFCFFCILMSAYASGMTLGYMKFSMIDLNTMLKIAEGDAAKKRVRRIMHFRRRSTQLVVTFSLFSSVFTVLFTTTCEKMLHGVSNEDVLKMAVPALICLIFAEMIPQAVCNSKFGFNLAASLWFVTVIIFFVTLPIAYPASLVLGRFLKRDVREVMTPEEKTCLLRSMAQNEREKTILENATTFTLKKVGQLMVPIEEVFMLSRSQKLNRSTVLTLVEKGYTRIPVYDNKNRSVIVGMLNMKNFNLLMVKTNLIDEPTVKEALHALELLKDRTVKFAVKYVNIEMNAHLLLNRMKTGDFHFACVVEYSAYDSKVVGIITIEDILEKLIGKIDEINELRVRSSIDDRGDNAVIGWCREAGSDKKYPLPFSQQLRILQHLLSECQVLKSLDIGIMKAKQILSLDRIRVGKKNDKLELHDLLLVIFEGTVLVTNEVETFERVIDVPSQRSSSTVNSQQHRQQTTDNSRSTPVPVLIIGKPLLNRLMKSLGSPFSEPLGPKDNVSELVVVSEEASYFKLRLEDLMNSINGCRKVDRNGHTTTGESLLQTLNSRASTSTSTTPACRTPLSVDARSQDETTPFMEKQE.

An N-terminal signal peptide occupies residues 1–17; that stretch reads MSLFLFAIFQLALGSPG. The Extracellular segment spans residues 18–139; it reads APNGPNVPLQ…AAAAKYMGDE (122 aa). 2 N-linked (GlcNAc...) asparagine glycosylation sites follow: asparagine 102 and asparagine 114. In terms of domain architecture, CNNM transmembrane spans 132–318; the sequence is AAKYMGDEIV…AQNEREKTIL (187 aa). A helical transmembrane segment spans residues 140–160; it reads IVFCFFCILMSAYASGMTLGY. Topologically, residues 161–196 are cytoplasmic; sequence MKFSMIDLNTMLKIAEGDAAKKRVRRIMHFRRRSTQ. Residues 197–217 form a helical membrane-spanning segment; it reads LVVTFSLFSSVFTVLFTTTCE. Residues 218–227 are Extracellular-facing; the sequence is KMLHGVSNED. The helical transmembrane segment at 228–248 threads the bilayer; that stretch reads VLKMAVPALICLIFAEMIPQA. Residues 249–257 lie on the Cytoplasmic side of the membrane; that stretch reads VCNSKFGFN. Residues 258 to 278 form a helical membrane-spanning segment; it reads LAASLWFVTVIIFFVTLPIAY. Over 279–722 the chain is Extracellular; sequence PASLVLGRFL…ETTPFMEKQE (444 aa). Residues asparagine 320, asparagine 349, and asparagine 371 are each glycosylated (N-linked (GlcNAc...) asparagine). CBS domains are found at residues 333–396 and 413–473; these read MVPI…LIDE and TVKF…KIDE. Residues 584–607 form a disordered region; that stretch reads SQRSSSTVNSQQHRQQTTDNSRST. Asparagine 639 carries an N-linked (GlcNAc...) asparagine glycan. Positions 686–722 are disordered; that stretch reads LNSRASTSTSTTPACRTPLSVDARSQDETTPFMEKQE. The span at 688–703 shows a compositional bias: low complexity; the sequence is SRASTSTSTTPACRTP.

The protein belongs to the ACDP family.

It localises to the cell membrane. Probable metal transporter. Probably acts redundantly with the other metal transport proteins cnnm-1, cnnm-2, cnnm-3 and cnnm-4 to regulate Mg(2+) homeostasis. In Caenorhabditis elegans, this protein is Metal transporter cnnm-5.